The primary structure comprises 517 residues: MFS efflux transporter inpD (517 aa).

A disordered region spans residues 1–24 (MEKTQTPSLTPDELSARSSTPFEE). A run of 5 helical transmembrane segments spans residues 37-57 (LKFS…ALSL), 59-79 (DIGW…LVFG), 89-109 (IVYL…ATAP), 112-132 (IALI…LSGA), and 151-171 (ILGA…GGII). A glycan (N-linked (GlcNAc...) asparagine) is linked at asparagine 172. 9 helical membrane passes run 178–198 (WIFY…VFLL), 219–239 (LPAF…LLWG), 247–267 (NARI…FMLV), 292–312 (FFSF…PIWL), 328–348 (LPII…TPVI), 352–372 (VPFM…LSTL), 381–401 (VLGF…QTLV), 412–432 (IPIG…IALS), and 485–505 (AIVK…IGVL).

The protein belongs to the major facilitator superfamily.

It is found in the cell membrane. Its function is as follows. MFS efflux transporter; part of the inp gene cluster that mediates the biosynthesis of fellutamide B, a mycotoxin that acts as a proteasome inhibitor. In the first step of fellutabmide B biosynthesis inpC activates 3-hydroxydodecanoic acid to generate 3-hydroxydodecanoyl-AMP that is then loaded onto the T0 domain of inpB. The 3-hydroxydodecanoyl-S-phosphopantetheinyl-T0 is sequentially extended with L-Asn and L-Gln by the two CAT modules of inpB. The linear lipodipeptide from inpB is then transferred onto inpA for the addition of the third amino acid, L-Leu. Reductive releasing of the lipotripeptide by the TE domain of inpA produces (2S)-fellutamide B. InpF might be involved in the release and transfer of the lipodipeptide from inpB to inpA. The inp cluster-encoded proteasome subunit inpE confers resistance to internally produced fellutamides. The MFS efflux transporter inpD may contribute to fellutamide resistance as well. This chain is MFS efflux transporter inpD, found in Emericella nidulans (strain FGSC A4 / ATCC 38163 / CBS 112.46 / NRRL 194 / M139) (Aspergillus nidulans).